Reading from the N-terminus, the 364-residue chain is RNA-binding protein ZC3H11 (364 aa).

The segment at 64 to 92 (RYKTKLCKNFVQYGTCPYDIRCMFAHGEE) adopts a C3H1-type zinc-finger fold. The MKT1-binding motif signature appears at 194-199 (VRHNPY). Residues 340–364 (EQSQSHLKREGNEGRGEGLHMFLSL) form a disordered region. Residues 346-357 (LKREGNEGRGEG) are compositionally biased toward basic and acidic residues.

As to quaternary structure, interacts (via MKT1-binding motif) with MKT1. Interacts with PBP1 (via C-terminus); the interaction is direct. Phosphorylated at the N-terminus. CK1.2-dependent phosphorylation may lead to proteasome-dependent degradation of ZC3H11 in absence of stress.

The protein localises to the cytoplasm. Functionally, RNA-binding protein involved in regulation of mRNA stability. Binds AU-rich regions in the 3'-UTR of mRNAs and promotes their stabilization by recruiting a MKT1-containing complex. Stabilizes chaperone mRNAs during stress that causes an accumulation of misfolded or unfolded proteins in the cytoplasm. This is RNA-binding protein ZC3H11 from Trypanosoma brucei brucei (strain 927/4 GUTat10.1).